The sequence spans 503 residues: GMP synthase [glutamine-hydrolyzing] (503 aa).

Positions 1–178 (MREANVYSEI…LHRAAGIPAD (178 aa)) constitute a Glutamine amidotransferase type-1 domain. Cys-60 functions as the Nucleophile in the catalytic mechanism. Residues His-152 and Glu-154 contribute to the active site. The region spanning 179 to 377 (WNSGNVIADQ…LGLPEVIVGR (199 aa)) is the GMPS ATP-PPase domain. 206–212 (SGGVDSA) lines the ATP pocket.

As to quaternary structure, homodimer.

The enzyme catalyses XMP + L-glutamine + ATP + H2O = GMP + L-glutamate + AMP + diphosphate + 2 H(+). Its pathway is purine metabolism; GMP biosynthesis; GMP from XMP (L-Gln route): step 1/1. Its function is as follows. Catalyzes the synthesis of GMP from XMP. This Leifsonia xyli subsp. xyli (strain CTCB07) protein is GMP synthase [glutamine-hydrolyzing].